Reading from the N-terminus, the 419-residue chain is Acetyl transferase GW6a (419 aa).

Residues 12–210 enclose the N-acetyltransferase domain; that stretch reads VRVREFDVEK…GHPVHAHRLP (199 aa). Positions 44–68 are disordered; it reads VHDHADDGDGAAAKEKKKTKTKTKK. Residues 58–68 show a composition bias toward basic residues; sequence EKKKTKTKTKK.

The protein belongs to the acetyltransferase family. In terms of assembly, interacts (via C-terminus) with HDR3 (via N-terminus). In terms of processing, ubiquitinated at Lys-63 by HDR3. Polyubiquitination of GW6A delays its degradation by the 26S proteasome and enhances GW6A histone acetyltransferase activity. Expressed in roots, leaf blades, leaf sheaths, shoot apical meristem and young panicles.

The protein resides in the nucleus. In terms of biological role, possesses intrinsic histone acetyltransferase activity and acts as a positive regulator of grain weight, hull size, yield, and plant biomass. Regulates postitively grain weight and yield by enlarging spikelet hulls via increasing cell number and accelerating grain filling. In vitro, catalyzes the acetylation of histone H4 at Lys-6 (H4K5ac), Lys-13 (H4K12ac) and Lys-17 (H4K16ac). Involved in the regulation of plastochron (the time interval between leaf initiation event). The polypeptide is Acetyl transferase GW6a (Oryza sativa subsp. japonica (Rice)).